Reading from the N-terminus, the 410-residue chain is Magnesium transporter NIPA3 (410 aa).

Residues 1–67 (MGAQVRLPPG…ISANVENKYS (67 aa)) lie on the Extracellular side of the membrane. Residues N25, N35, N50, and N55 are each glycosylated (N-linked (GlcNAc...) asparagine). Residues 68 to 88 (LYVGLVLAVSSSIFIGSSFIL) traverse the membrane as a helical segment. The Cytoplasmic segment spans residues 89–114 (KKKGLLQLASKGFTRAGQGGHSYLKE). A helical membrane pass occupies residues 115-135 (WLWWVGLLSMGAGEAANFAAY). Position 136 (A136) is a topological domain, extracellular. A helical membrane pass occupies residues 137-157 (FAPATLVTPLGALSVLISAIL). The Cytoplasmic segment spans residues 158 to 165 (SSYFLNEH). The chain crosses the membrane as a helical span at residues 166–186 (LNIHGKIGCILSILGSTVMVI). Over 187 to 207 (HAPQEEEVTSLHEMEMKLRDP) the chain is Extracellular. Residues 208–228 (GFISFAVIITVISLVLILIVA) traverse the membrane as a helical segment. Over 229 to 233 (PKKGQ) the chain is Cytoplasmic. The chain crosses the membrane as a helical span at residues 234–254 (TNILVYISICSLIGAFSVSSV). At 255–273 (KGLGIAIKELIEWKPVYKH) the chain is on the extracellular side. The chain crosses the membrane as a helical span at residues 274-294 (PLVFVLLAVLVLSVTTQINYL). Topologically, residues 295–305 (NKALDTFNTSL) are cytoplasmic. A helical transmembrane segment spans residues 306 to 326 (VTPIYYVFFTSMVVTCSAILF). Over 327 to 336 (QEWYGMTAGD) the chain is Extracellular. A helical transmembrane segment spans residues 337-357 (IIGTLSGFFTIIIGIFLLHAF). Residues 358–410 (KNTDITWSELTSTAKKEAVSLNVNENNYVLLENLECSAPGYNDDVTLFSRTDD) lie on the Cytoplasmic side of the membrane.

Belongs to the NIPA family. In terms of tissue distribution, expressed in the pancreatic islets.

It localises to the golgi apparatus membrane. It carries out the reaction Mg(2+)(in) = Mg(2+)(out). In terms of biological role, acts as a Mg(2+) transporter. Can also transport other divalent cations such as Fe(2+), Sr(2+), Ba(2+), Mn(2+), Cu(2+) and Co(2+) but to a much less extent than Mg(2+). This is Magnesium transporter NIPA3 (NIPAL1) from Homo sapiens (Human).